A 61-amino-acid chain; its full sequence is Large ribosomal subunit protein uL30 (61 aa).

It belongs to the universal ribosomal protein uL30 family. As to quaternary structure, part of the 50S ribosomal subunit.

This is Large ribosomal subunit protein uL30 from Corynebacterium glutamicum (strain ATCC 13032 / DSM 20300 / JCM 1318 / BCRC 11384 / CCUG 27702 / LMG 3730 / NBRC 12168 / NCIMB 10025 / NRRL B-2784 / 534).